The sequence spans 283 residues: NAD kinase (283 aa).

Asp-67 acts as the Proton acceptor in catalysis. NAD(+) contacts are provided by residues 67-68, Arg-72, 136-137, Lys-147, Arg-164, Asp-166, 177-182, and Gln-236; these read DG, NE, and TAYSMS.

The protein belongs to the NAD kinase family. The cofactor is a divalent metal cation.

It localises to the cytoplasm. The catalysed reaction is NAD(+) + ATP = ADP + NADP(+) + H(+). In terms of biological role, involved in the regulation of the intracellular balance of NAD and NADP, and is a key enzyme in the biosynthesis of NADP. Catalyzes specifically the phosphorylation on 2'-hydroxyl of the adenosine moiety of NAD to yield NADP. This is NAD kinase from Methanothermobacter thermautotrophicus (strain ATCC 29096 / DSM 1053 / JCM 10044 / NBRC 100330 / Delta H) (Methanobacterium thermoautotrophicum).